A 550-amino-acid chain; its full sequence is Hydroxylamine reductase (550 aa).

[2Fe-2S] cluster-binding residues include cysteine 3, cysteine 6, cysteine 18, and cysteine 25. The hybrid [4Fe-2O-2S] cluster site is built by histidine 249, glutamate 273, cysteine 317, cysteine 405, cysteine 433, cysteine 458, glutamate 492, and lysine 494. A Cysteine persulfide modification is found at cysteine 405.

Belongs to the HCP family. The cofactor is [2Fe-2S] cluster. It depends on hybrid [4Fe-2O-2S] cluster as a cofactor.

It is found in the cytoplasm. It carries out the reaction A + NH4(+) + H2O = hydroxylamine + AH2 + H(+). In terms of biological role, catalyzes the reduction of hydroxylamine to form NH(3) and H(2)O. The polypeptide is Hydroxylamine reductase (Salmonella schwarzengrund (strain CVM19633)).